A 30-amino-acid polypeptide reads, in one-letter code: Kalata-B14 (30 aa).

A cross-link (cyclopeptide (Gly-Asp)) is located at residues 1–30; the sequence is GLPVCGESCFGGTCNTPGCACDPWPVCTRD. 3 disulfides stabilise this stretch: Cys-5–Cys-19, Cys-9–Cys-21, and Cys-14–Cys-27.

This is a cyclic peptide.

Its function is as follows. Probably participates in a plant defense mechanism. The sequence is that of Kalata-B14 from Oldenlandia affinis.